We begin with the raw amino-acid sequence, 378 residues long: tRNA (guanine(37)-N(1))-methyltransferase (378 aa).

S-adenosyl-L-methionine is bound by residues His196, 234 to 235 (DL), 262 to 263 (DA), and Asn282.

Belongs to the class I-like SAM-binding methyltransferase superfamily. TRM5/TYW2 family. In terms of assembly, monomer.

Its subcellular location is the mitochondrion matrix. The protein localises to the nucleus. It is found in the cytoplasm. It carries out the reaction guanosine(37) in tRNA + S-adenosyl-L-methionine = N(1)-methylguanosine(37) in tRNA + S-adenosyl-L-homocysteine + H(+). Functionally, specifically methylates the N1 position of guanosine-37 in various cytoplasmic and mitochondrial tRNAs. Methylation is not dependent on the nature of the nucleoside 5' of the target nucleoside. This is the first step in the biosynthesis of wybutosine (yW), a modified base adjacent to the anticodon of tRNAs and required for accurate decoding. This chain is tRNA (guanine(37)-N(1))-methyltransferase, found in Trichomonas vaginalis (strain ATCC PRA-98 / G3).